The primary structure comprises 536 residues: CTP synthase (536 aa).

Residues 1-267 are amidoligase domain; it reads MSKFVFVTGG…CKETLKYLEL (267 aa). Ser-13 lines the CTP pocket. Residue Ser-13 coordinates UTP. Residues 14–19 and Asp-71 contribute to the ATP site; that span reads SIGKGI. Mg(2+) contacts are provided by Asp-71 and Glu-141. CTP contacts are provided by residues 148-150, 188-193, and Lys-224; these read DIE and KTKPTQ. Residues 188 to 193 and Lys-224 each bind UTP; that span reads KTKPTQ. Residues 292 to 534 form the Glutamine amidotransferase type-1 domain; it reads KVALVGKYIE…IKASQEKLTQ (243 aa). Gly-354 contributes to the L-glutamine binding site. Cys-381 functions as the Nucleophile; for glutamine hydrolysis in the catalytic mechanism. L-glutamine is bound by residues 382–385, Glu-405, and Arg-462; that span reads LGMQ. Catalysis depends on residues His-507 and Glu-509.

This sequence belongs to the CTP synthase family. In terms of assembly, homotetramer.

The catalysed reaction is UTP + L-glutamine + ATP + H2O = CTP + L-glutamate + ADP + phosphate + 2 H(+). It catalyses the reaction L-glutamine + H2O = L-glutamate + NH4(+). It carries out the reaction UTP + NH4(+) + ATP = CTP + ADP + phosphate + 2 H(+). Its pathway is pyrimidine metabolism; CTP biosynthesis via de novo pathway; CTP from UDP: step 2/2. With respect to regulation, allosterically activated by GTP, when glutamine is the substrate; GTP has no effect on the reaction when ammonia is the substrate. The allosteric effector GTP functions by stabilizing the protein conformation that binds the tetrahedral intermediate(s) formed during glutamine hydrolysis. Inhibited by the product CTP, via allosteric rather than competitive inhibition. Catalyzes the ATP-dependent amination of UTP to CTP with either L-glutamine or ammonia as the source of nitrogen. Regulates intracellular CTP levels through interactions with the four ribonucleotide triphosphates. The chain is CTP synthase from Prochlorococcus marinus (strain MIT 9215).